We begin with the raw amino-acid sequence, 287 residues long: Phosphatidylinositol transfer protein 5 (287 aa).

Residues F252–K287 are disordered. Over residues N254–N270 the composition is skewed to low complexity. Over residues T271 to K287 the composition is skewed to polar residues.

The protein belongs to the PtdIns transfer protein family. PI transfer class IIA subfamily.

Its function is as follows. Phosphatidylinositol transfer proteins mediate the monomeric transport of lipids by shielding a lipid from the aqueous environment and binding the lipid in a hydrophobic cavity. In Dictyostelium discoideum (Social amoeba), this protein is Phosphatidylinositol transfer protein 5 (pitE).